We begin with the raw amino-acid sequence, 66 residues long: Light-harvesting protein B-800-850 alpha chain B (66 aa).

At 1 to 11 (MNQGRIWTVVN) the chain is on the cytoplasmic side. The helical transmembrane segment at 12–35 (PGVGLPLLLGSVTVIAILVHYAVL) threads the bilayer. His-31 is an a bacteriochlorophyll binding site. At 36–66 (SNTTWFPKYWNGATVAAPAAAPAPAAPAAKK) the chain is on the periplasmic side.

The protein belongs to the antenna complex alpha subunit family. In terms of assembly, the core complex is formed by different alpha and beta chains, binding bacteriochlorophyll molecules, and arranged most probably in tetrameric structures disposed around the reaction center. The non-pigmented gamma chains may constitute additional components.

Its subcellular location is the cell inner membrane. Antenna complexes are light-harvesting systems, which transfer the excitation energy to the reaction centers. The chain is Light-harvesting protein B-800-850 alpha chain B (pucAB) from Rhodopseudomonas palustris (strain ATCC BAA-98 / CGA009).